A 204-amino-acid chain; its full sequence is Urease accessory protein UreG (204 aa).

15-22 (GPVGSGKT) provides a ligand contact to GTP.

It belongs to the SIMIBI class G3E GTPase family. UreG subfamily. In terms of assembly, homodimer. UreD, UreF and UreG form a complex that acts as a GTP-hydrolysis-dependent molecular chaperone, activating the urease apoprotein by helping to assemble the nickel containing metallocenter of UreC. The UreE protein probably delivers the nickel.

The protein resides in the cytoplasm. Facilitates the functional incorporation of the urease nickel metallocenter. This process requires GTP hydrolysis, probably effectuated by UreG. This is Urease accessory protein UreG from Methylobacterium nodulans (strain LMG 21967 / CNCM I-2342 / ORS 2060).